The sequence spans 349 residues: Soluble TNF receptor II (349 aa).

The signal sequence occupies residues 1-19; the sequence is MKSVLYSYILFLSCIIING. TNFR-Cys repeat units lie at residues 31 to 65 and 67 to 108; these read KCKD…NTQC and PCGS…NRIC. Cystine bridges form between C32/C43, C44/C57, C47/C65, C68/C83, C86/C100, and C90/C108. N-linked (GlcNAc...) asparagine; by host glycans are attached at residues N101, N189, and N248.

Belongs to the orthopoxvirus OPG002 family.

Inhibits host immune defense by binding to host TNF and various chemokines in the extracellular space. Binds host CC chemokines (beta chemokines) and CXC chemokines (alpha chemokines). The sequence is that of Soluble TNF receptor II (OPG002) from Camelus.